Consider the following 186-residue polypeptide: Glutathione-independent glyoxalase DJR-1.2 (186 aa).

Active-site residues include glutamate 20, cysteine 105, and histidine 124.

Belongs to the peptidase C56 family. DJ-1 subfamily. Expressed in various tissues, including pharyngeal muscles, pharynx-intestinal valve, ventral nerve cord, spermatheca, rectal gland, inner labial (IL) cells of head neurons, phasmid (PHA/PHB) neurons in tail and supporting sheath/socket cells, as well as in head mesodermal cells (HMC), excretory canals and coelomocytes.

Its subcellular location is the cytoplasm. The catalysed reaction is methylglyoxal + H2O = (R)-lactate + H(+). Catalyzes the conversion of methylglyoxal (MG) or glyoxal (GO) to D-lactate or glycolic acid respectively in a single glutathione (GSH)-independent step. May play a role in detoxifying endogenously produced glyoxals. Involved in protection against glyoxal-induced cell death. Protects dopaminergic neurons from glyoxal-dependent neuronal degeneration. This Caenorhabditis elegans protein is Glutathione-independent glyoxalase DJR-1.2.